The primary structure comprises 664 residues: Intraflagellar transport protein 70B (664 aa).

TPR repeat units follow at residues 11–44 (DGEF…SPRS), 45–78 (RAGL…HPEL), 153–186 (YDGQ…SGYQ), 188–220 (DISY…GIRQ), 385–418 (LTEQ…YDET), 423–456 (IPVL…CNDH), and 458–491 (VWKL…NYDN). A coiled-coil region spans residues 507 to 534 (YIMTSQNEEAEELMRKIEKEEEQLSYDD). Residues 543–576 (CIVNLVIGTLYCAKGNYDFGISRVIKSLEPYHKK) form a TPR 8 repeat.

This sequence belongs to the TTC30/dfy-1/fleer family. Interacts with the IFT B complex components IFT27, IFT46, IFT74, IFT52, IFT57, IFT80, IFT81 and IFT88. Interacts with KIF17.

It localises to the cell projection. Its subcellular location is the cilium. Its function is as follows. Required for polyglutamylation of axonemal tubulin. Plays a role in anterograde intraflagellar transport (IFT), the process by which cilia precursors are transported from the base of the cilium to the site of their incorporation at the tip. The protein is Intraflagellar transport protein 70B (Ift70b) of Rattus norvegicus (Rat).